Consider the following 55-residue polypeptide: MVKLSKEAKQRLQQLFKGGQFAIRWGFIPLVIYLGFKRGADPGMPEPTVLSLLWG.

At 1-20 (MVKLSKEAKQRLQQLFKGGQ) the chain is on the cytoplasmic side. Residues 21–36 (FAIRWGFIPLVIYLGF) form a helical membrane-spanning segment. Residues 37–55 (KRGADPGMPEPTVLSLLWG) are Mitochondrial intermembrane-facing.

The protein belongs to the Tom7 family. Forms part of the preprotein translocase complex of the outer mitochondrial membrane (TOM complex) which consists of at least 7 different proteins (TOMM5, TOMM6, TOMM7, TOMM20, TOMM22, TOMM40 and TOMM70).

The protein localises to the mitochondrion outer membrane. Functionally, required for assembly and stability of the TOM complex. Positive regulator of PRKN translocation to damaged mitochondria. Acts probably by stabilizing PINK1 on the outer membrane of depolarized mitochondria. The protein is Mitochondrial import receptor subunit TOM7 homolog (TOMM7) of Bos taurus (Bovine).